A 156-amino-acid chain; its full sequence is Small ribosomal subunit protein uS7 (156 aa).

Belongs to the universal ribosomal protein uS7 family. Part of the 30S ribosomal subunit. Contacts proteins S9 and S11.

In terms of biological role, one of the primary rRNA binding proteins, it binds directly to 16S rRNA where it nucleates assembly of the head domain of the 30S subunit. Is located at the subunit interface close to the decoding center, probably blocks exit of the E-site tRNA. The polypeptide is Small ribosomal subunit protein uS7 (Levilactobacillus brevis (strain ATCC 367 / BCRC 12310 / CIP 105137 / JCM 1170 / LMG 11437 / NCIMB 947 / NCTC 947) (Lactobacillus brevis)).